The primary structure comprises 310 residues: Acetylglutamate kinase (310 aa).

Substrate-binding positions include G79–G80, R101, and N206.

Belongs to the acetylglutamate kinase family. ArgB subfamily.

It is found in the cytoplasm. The catalysed reaction is N-acetyl-L-glutamate + ATP = N-acetyl-L-glutamyl 5-phosphate + ADP. The protein operates within amino-acid biosynthesis; L-arginine biosynthesis; N(2)-acetyl-L-ornithine from L-glutamate: step 2/4. Its function is as follows. Catalyzes the ATP-dependent phosphorylation of N-acetyl-L-glutamate. The protein is Acetylglutamate kinase of Rhodospirillum rubrum (strain ATCC 11170 / ATH 1.1.1 / DSM 467 / LMG 4362 / NCIMB 8255 / S1).